A 184-amino-acid chain; its full sequence is RNA 2',3'-cyclic phosphodiesterase (184 aa).

Residue His-40 is the Proton donor of the active site. Short sequence motifs (HXTX) lie at residues 40-43 (HITL) and 125-128 (HITL). The Proton acceptor role is filled by His-125.

It belongs to the 2H phosphoesterase superfamily. ThpR family.

It carries out the reaction a 3'-end 2',3'-cyclophospho-ribonucleotide-RNA + H2O = a 3'-end 2'-phospho-ribonucleotide-RNA + H(+). Its function is as follows. Hydrolyzes RNA 2',3'-cyclic phosphodiester to an RNA 2'-phosphomonoester. In vitro, ligates 5' and 3' half-tRNA molecules with 2',3'-cyclic phosphate and 5'-hydroxyl termini, respectively, to the product containing the 2'-5' phosphodiester linkage. Ligase activity requires GTP, but GTP hydrolysis is not required for the reaction, which is reversible. Ligase activity is weak compared to the phosphodiesterase activity. The chain is RNA 2',3'-cyclic phosphodiesterase from Pyrococcus furiosus (strain ATCC 43587 / DSM 3638 / JCM 8422 / Vc1).